The following is a 253-amino-acid chain: Ribosomal RNA small subunit methyltransferase A (253 aa).

Residues His12, Leu14, Gly39, Glu60, Asp81, and Asn104 each coordinate S-adenosyl-L-methionine.

The protein belongs to the class I-like SAM-binding methyltransferase superfamily. rRNA adenine N(6)-methyltransferase family. RsmA subfamily.

It is found in the cytoplasm. The enzyme catalyses adenosine(1518)/adenosine(1519) in 16S rRNA + 4 S-adenosyl-L-methionine = N(6)-dimethyladenosine(1518)/N(6)-dimethyladenosine(1519) in 16S rRNA + 4 S-adenosyl-L-homocysteine + 4 H(+). In terms of biological role, specifically dimethylates two adjacent adenosines (A1518 and A1519) in the loop of a conserved hairpin near the 3'-end of 16S rRNA in the 30S particle. May play a critical role in biogenesis of 30S subunits. The protein is Ribosomal RNA small subunit methyltransferase A of Paracidovorax citrulli (strain AAC00-1) (Acidovorax citrulli).